We begin with the raw amino-acid sequence, 469 residues long: Protopanaxadiol 6-hydroxylase (469 aa).

Residues 3-23 traverse the membrane as a helical segment; that stretch reads LFISSQLLLLLVFCLFLFWNF. Cys-416 is a binding site for heme.

Belongs to the cytochrome P450 family. Heme serves as cofactor. As to expression, accumulates ubiquitously in all organs of plants, including roots, stems and leaves.

The protein localises to the membrane. The enzyme catalyses (20S)-protopanaxadiol + reduced [NADPH--hemoprotein reductase] + O2 = (20S)-protopanaxatriol + oxidized [NADPH--hemoprotein reductase] + H2O + H(+). The protein operates within secondary metabolite biosynthesis; terpenoid biosynthesis. With respect to regulation, activated by N,N'-dicyclohexylcarbodiimide (DCCD) thus leading to increased ginsenosides accumulation. Functionally, component of the dammarane-type triterpene saponins (e.g. PPT-type ginsenosides or panaxosides) biosynthetic pathway. Catalyzes the formation of protopanaxatriol from protopanaxadiol during ginsenoside biosynthesis, a class of tetracyclic triterpenoid saponins. The chain is Protopanaxadiol 6-hydroxylase from Panax ginseng (Korean ginseng).